The sequence spans 150 residues: UPF0756 membrane protein HI_1074 (150 aa).

4 helical membrane-spanning segments follow: residues methionine 1–leucine 21, tyrosine 52–glycine 72, glycine 81–alanine 101, and isoleucine 123–leucine 143.

This sequence belongs to the UPF0756 family.

The protein localises to the cell membrane. This is UPF0756 membrane protein HI_1074 from Haemophilus influenzae (strain ATCC 51907 / DSM 11121 / KW20 / Rd).